A 1032-amino-acid chain; its full sequence is FACT complex subunit ctc-2 (1032 aa).

The interval 446–513 (DEEEAQPTPK…QKEGLAKYAE (68 aa)) is disordered. Over residues 476 to 508 (LRSERNTTVDEDADKRRREHQKELAQKKQKEGL) the composition is skewed to basic and acidic residues. Coiled coils occupy residues 485–506 (DEDA…KQKE), 624–658 (DRYA…EQDK), 785–805 (RRRR…IAEA), and 949–1010 (EVEE…RKAK). The disordered stretch occupies residues 943–1032 (NDSDDDEVEE…ERAAPKKRRK (90 aa)). Acidic residues-rich tracts occupy residues 944–979 (DSDD…DSEY) and 986–1004 (EASD…DWDE).

This sequence belongs to the peptidase M24 family. SPT16 subfamily. Forms a stable heterodimer with ctc-1/pob3. The dimer of ctc-1 and ctc-2 weakly associates with multiple molecules of nhp-1/nhp6 to form the FACT complex.

It is found in the nucleus. The protein localises to the chromosome. Functionally, component of the FACT complex, a general chromatin factor that acts to reorganize nucleosomes. The FACT complex is involved in multiple processes that require DNA as a template such as mRNA elongation, DNA replication and DNA repair. During transcription elongation the FACT complex acts as a histone chaperone that both destabilizes and restores nucleosomal structure. It facilitates the passage of RNA polymerase II and transcription by promoting the dissociation of one histone H2A-H2B dimer from the nucleosome, then subsequently promotes the reestablishment of the nucleosome following the passage of RNA polymerase II. The protein is FACT complex subunit ctc-2 (ctc-2) of Neurospora crassa (strain ATCC 24698 / 74-OR23-1A / CBS 708.71 / DSM 1257 / FGSC 987).